The sequence spans 334 residues: Serine/threonine-protein kinase (334 aa).

The Protein kinase domain occupies 53 to 333; it reads FEVLQPLQSG…DEILNFGMWT (281 aa). ATP is bound by residues 59 to 67 and Lys-82; that span reads LQSGSEGRV. The Proton acceptor role is filled by Asp-167.

The protein belongs to the protein kinase superfamily. Ser/Thr protein kinase family.

The enzyme catalyses L-seryl-[protein] + ATP = O-phospho-L-seryl-[protein] + ADP + H(+). It catalyses the reaction L-threonyl-[protein] + ATP = O-phospho-L-threonyl-[protein] + ADP + H(+). Functionally, able to phosphorylate in vitro the major virion phosphoprotein phosphorylated in vivo. The sequence is that of Serine/threonine-protein kinase (PK) from Sus scrofa (Pig).